Consider the following 360-residue polypeptide: Lactosylceramide 4-alpha-galactosyltransferase (360 aa).

Topologically, residues 1–30 (MGISRSDLEETMSKPPDCLPRMLRGTPRQR) are cytoplasmic. Residues 31–51 (VFTLFIISFKFTFLVSILIYW) form a helical; Signal-anchor for type II membrane protein membrane-spanning segment. Residues 52–360 (HTVGAPKDQR…TTHRAMTMYL (309 aa)) are Lumenal-facing. The DXD motif signature appears at 199–201 (DTD). N-linked (GlcNAc...) asparagine glycosylation is found at Asn-210 and Asn-316.

It belongs to the glycosyltransferase 32 family. In terms of tissue distribution, ubiquitous. Highly expressed in kidney, mesenteric lymph node, spleen and brain.

It is found in the golgi apparatus membrane. The enzyme catalyses a beta-D-Gal-(1-&gt;4)-beta-D-Glc-(1&lt;-&gt;1)-Cer(d18:1(4E)) + UDP-alpha-D-galactose = a globoside Gb3Cer (d18:1(4E)) + UDP + H(+). It catalyses the reaction a beta-D-Gal-(1&lt;-&gt;1')-ceramide + UDP-alpha-D-galactose = alpha-D-Gal-(1-&gt;4)-beta-D-Gal-(1&lt;-&gt;1')-Cer + UDP + H(+). It participates in glycolipid biosynthesis. Catalyzes the transfer of galactose from UDP-alpha-D-galactose to lactosylceramide/beta-D-galactosyl-(1-&gt;4)-beta-D-glucosyl-(1&lt;-&gt;1)-ceramide(d18:1(4E)) to produce globotriaosylceramide/globoside Gb3Cer (d18:1(4E)). Also able to transfer galactose to galactosylceramide/beta-D-Gal-(1&lt;-&gt;1')-Cer. Globoside Gb3Cer is a glycosphingolipid of the globo serie, one of the major types of neutral root structures of glycosphingolipids, that constitute a significant portion of mammalian cell membranes. This is Lactosylceramide 4-alpha-galactosyltransferase from Rattus norvegicus (Rat).